We begin with the raw amino-acid sequence, 93 residues long: C-C motif chemokine 17 (93 aa).

The first 23 residues, 1-23 (MMSLQMLLLAALLLGTSLQHASA), serve as a signal peptide directing secretion. Cystine bridges form between cysteine 33/cysteine 57 and cysteine 34/cysteine 73.

Belongs to the intercrine beta (chemokine CC) family.

It localises to the secreted. Functionally, chemokine, which displays chemotactic activity for T lymphocytes, preferentially Th2 cells, but not monocytes or granulocytes. Therefore plays an important role in a wide range of inflammatory and immunological processes. Acts by binding to CCR4 at T-cell surface. Mediates GM-CSF/CSF2-driven pain and inflammation. In the brain, required to maintain the typical, highly branched morphology of hippocampal microglia under homeostatic conditions. May be important for the appropriate adaptation of microglial morphology and synaptic plasticity to acute lipopolysaccharide (LPS)-induced neuroinflammation. Plays a role in wound healing, mainly by inducing fibroblast migration into the wound. This Rattus norvegicus (Rat) protein is C-C motif chemokine 17 (Ccl17).